Reading from the N-terminus, the 204-residue chain is Heart- and neural crest derivatives-expressed protein 1 (204 aa).

Disordered regions lie at residues 1–24 (MNLVGSYAHHHHHHHHHHHPHPAH), 57–115 (APDF…RTES), and 172–204 (LKKADGGRESKRKRELQQHEGFPPALGPGEKRD). 2 stretches are compositionally biased toward basic residues: residues 8–22 (AHHHHHHHHHHHPHP) and 98–110 (LGRRKGSGPKKER). In terms of domain architecture, bHLH spans 100-152 (RRKGSGPKKERRRTESINSAFAELRECIPNVPADTKLSKIKTLRLATSYIAYL). Position 113 is a phosphothreonine; by PLK4 (Thr-113). At Ser-115 the chain carries Phosphoserine; by PLK4.

In terms of assembly, efficient DNA binding requires dimerization with another bHLH protein. Forms homodimers and heterodimers with TCF3 gene products E12 and E47, HAND2 and HEY1, HEY2 and HEYL (hairy-related transcription factors). Interacts with MDFIC. Interacts with SOX15; the interaction enhances HAND1-induced differentiation of trophoblast giant cells. In terms of processing, phosphorylation by PLK4 disrupts the interaction with MDFIC and leads to translocation into the nucleoplasm, allowing dimerization and transcription factor activity.

The protein localises to the nucleus. The protein resides in the nucleoplasm. It localises to the nucleolus. Transcription factor that plays an essential role in both trophoblast giant cell differentiation and in cardiac morphogenesis. Binds the DNA sequence 5'-NRTCTG-3' (non-canonical E-box). Acts as a transcriptional repressor of SOX15. In the adult, could be required for ongoing expression of cardiac-specific genes. This is Heart- and neural crest derivatives-expressed protein 1 (HAND1) from Ovis aries (Sheep).